Reading from the N-terminus, the 215-residue chain is ATP-dependent dethiobiotin synthetase BioD (215 aa).

Residue 13 to 18 (DIGKTV) participates in ATP binding. Threonine 17 is a Mg(2+) binding site. Lysine 38 is a catalytic residue. Threonine 42 serves as a coordination point for substrate. ATP-binding positions include aspartate 50, 115–118 (EGAG), and 175–176 (NH). Aspartate 50 and glutamate 115 together coordinate Mg(2+).

It belongs to the dethiobiotin synthetase family. As to quaternary structure, homodimer. Mg(2+) is required as a cofactor.

Its subcellular location is the cytoplasm. It carries out the reaction (7R,8S)-7,8-diammoniononanoate + CO2 + ATP = (4R,5S)-dethiobiotin + ADP + phosphate + 3 H(+). Its pathway is cofactor biosynthesis; biotin biosynthesis; biotin from 7,8-diaminononanoate: step 1/2. Catalyzes a mechanistically unusual reaction, the ATP-dependent insertion of CO2 between the N7 and N8 nitrogen atoms of 7,8-diaminopelargonic acid (DAPA, also called 7,8-diammoniononanoate) to form a ureido ring. This chain is ATP-dependent dethiobiotin synthetase BioD, found in Neisseria gonorrhoeae (strain NCCP11945).